A 130-amino-acid chain; its full sequence is Holo-[acyl-carrier-protein] synthase (130 aa).

The Mg(2+) site is built by Asp9 and Glu58.

The protein belongs to the P-Pant transferase superfamily. AcpS family. Mg(2+) is required as a cofactor.

It localises to the cytoplasm. The catalysed reaction is apo-[ACP] + CoA = holo-[ACP] + adenosine 3',5'-bisphosphate + H(+). Functionally, transfers the 4'-phosphopantetheine moiety from coenzyme A to a Ser of acyl-carrier-protein. The chain is Holo-[acyl-carrier-protein] synthase from Mycobacterium tuberculosis (strain CDC 1551 / Oshkosh).